The sequence spans 153 residues: Aspartate carbamoyltransferase regulatory chain (153 aa).

Cys108, Cys113, Cys137, and Cys140 together coordinate Zn(2+).

It belongs to the PyrI family. As to quaternary structure, contains catalytic and regulatory chains. Zn(2+) is required as a cofactor.

Functionally, involved in allosteric regulation of aspartate carbamoyltransferase. This chain is Aspartate carbamoyltransferase regulatory chain, found in Methanosphaera stadtmanae (strain ATCC 43021 / DSM 3091 / JCM 11832 / MCB-3).